The following is a 151-amino-acid chain: Protein-export protein SecB (151 aa).

It belongs to the SecB family. As to quaternary structure, homotetramer, a dimer of dimers. One homotetramer interacts with 1 SecA dimer.

The protein resides in the cytoplasm. Its function is as follows. One of the proteins required for the normal export of preproteins out of the cell cytoplasm. It is a molecular chaperone that binds to a subset of precursor proteins, maintaining them in a translocation-competent state. It also specifically binds to its receptor SecA. This Acinetobacter baylyi (strain ATCC 33305 / BD413 / ADP1) protein is Protein-export protein SecB.